The primary structure comprises 608 residues: Scaffold protein salvador (608 aa).

Disordered stretches follow at residues 17-37, 64-145, 157-202, 220-243, 264-293, and 345-425; these read SRRN…YMKK, STSP…SQNS, MRRQ…YDAD, PHSP…QQHA, QPRY…HTQL, and PQHH…ELPL. A compositionally biased stretch (basic and acidic residues) spans 22-37; it reads EKSQHKEGVVGKYMKK. Positions 32 to 38 match the Ferm-binding motif (FBM) motif; it reads GKYMKKD. The segment covering 64-89 has biased composition (polar residues); the sequence is STSPSCEFHPRSSSTSRNTYSCTDSQ. Residues 108–125 show a composition bias toward basic residues; that stretch reads SHSHPHSLPHPSHPHVRS. Low complexity-rich tracts occupy residues 160–172, 229–242, and 275–289; these read QQSS…TSSP, PPQQ…HQQH, and QQQQ…QQLQ. Residues 274-294 are a coiled coil; sequence MQQQQQQQQQQQQQLQHTQLA. Residues 358–373 show a composition bias toward gly residues; it reads GSGGGSLSGSGRGGSS. Phosphoserine is present on residues S413 and S416. 2 consecutive WW domains span residues 423 to 456 and 458 to 491; these read LPLP…HPLE and EGLP…HPCL. The region spanning 552–599 is the SARAH domain; the sequence is LLQFNMFSLPELEGFDSMLVRLFKQELGTIVGFYERYRRALILEKNRR.

In terms of assembly, interacts with Wts via its WW domains. Interacts (via FBM motif) with Mer (via FERM domain). Interacts with Kibra. Interacts with Hpo (via SARAH domain). Interacts with jub. In terms of processing, phosphorylated by Hpo. In terms of tissue distribution, third instar larvae eye disk, expressed in a stripe in the morphogenetic furrow, decreases in the region of the second mitotic wave (SMW) and increases once again posterior to the SMW.

In terms of biological role, plays a key role in the Hippo/SWH (Sav/Wts/Hpo) signaling pathway, a signaling pathway that plays a pivotal role in organ size control and tumor suppression by restricting proliferation and promoting apoptosis. The core of this pathway is composed of a kinase cascade wherein Hippo (Hpo), in complex with its regulatory protein Salvador (Sav), phosphorylates and activates Warts (Wts) in complex with its regulatory protein Mats, which in turn phosphorylates and inactivates the Yorkie (Yki) oncoprotein. The Hippo/SWH signaling pathway inhibits the activity of the transcriptional complex formed by Scalloped (sd) and Yki and the target genes of this pathway include cyclin-E (cycE), diap1 and bantam. Required for cell cycle exit in eye imaginal disk and hid-induced apoptotic cell deaths that are part of normal retinal development. Activation of Drice in eye imaginal disk by either Hid or Rpr is almost completely blocked by Sav expression. In Drosophila melanogaster (Fruit fly), this protein is Scaffold protein salvador (sav).